A 548-amino-acid chain; its full sequence is Chaperonin GroEL (548 aa).

Residues 30–33 (TLGP), lysine 51, 87–91 (DGTTT), glycine 415, 479–481 (NAA), and aspartate 495 each bind ATP.

This sequence belongs to the chaperonin (HSP60) family. In terms of assembly, forms a cylinder of 14 subunits composed of two heptameric rings stacked back-to-back. Interacts with the co-chaperonin GroES.

Its subcellular location is the cytoplasm. It carries out the reaction ATP + H2O + a folded polypeptide = ADP + phosphate + an unfolded polypeptide.. Together with its co-chaperonin GroES, plays an essential role in assisting protein folding. The GroEL-GroES system forms a nano-cage that allows encapsulation of the non-native substrate proteins and provides a physical environment optimized to promote and accelerate protein folding. The polypeptide is Chaperonin GroEL (Sodalis glossinidius (strain morsitans)).